The primary structure comprises 118 residues: Movement protein TGB2 (118 aa).

Over 1 to 11 (MSREITARPNK) the chain is Cytoplasmic. The chain crosses the membrane as a helical span at residues 12–32 (NVPIVVGVCVVAFFVLLAFMQ). Topologically, residues 33 to 81 (QKHKTHSGGDYGVPTFSNGGKYRDGTRSADFNSNNHRAYGCGGSGGSVS) are lumenal. A helical transmembrane segment spans residues 82-102 (SRVGQQLVVLAIVSVLIVSLL). At 103-118 (QRLRSPPEHICNGACG) the chain is on the cytoplasmic side.

Belongs to the virgaviridae/benyvirus TGB2 movement protein family. Interacts with movement protein TGB3.

The protein resides in the host cell junction. Its subcellular location is the host plasmodesma. It localises to the host endoplasmic reticulum membrane. Functionally, participates in the transport of viral RNA to the plasmodesmata. Is probably targeted to plasmodesmata by TGBp3, along with viral RNAs-TGBp1 (RNP complex). Can gate plasmodesmata and increase their size exclusion limit. The sequence is that of Movement protein TGB2 from Beet necrotic yellow vein virus (isolate Japan/S) (BNYVV).